The chain runs to 341 residues: Methionine import ATP-binding protein MetN (341 aa).

The ABC transporter domain occupies 9-247 (ISVQKVNKEI…PRSSITEELF (239 aa)). Residue 41–48 (GHSGSGKS) participates in ATP binding.

The protein belongs to the ABC transporter superfamily. Methionine importer (TC 3.A.1.24) family. As to quaternary structure, the complex is composed of two ATP-binding proteins (MetN), two transmembrane proteins (MetI) and a solute-binding protein (MetQ).

It is found in the cell inner membrane. The catalysed reaction is L-methionine(out) + ATP + H2O = L-methionine(in) + ADP + phosphate + H(+). It catalyses the reaction D-methionine(out) + ATP + H2O = D-methionine(in) + ADP + phosphate + H(+). Its function is as follows. Part of the ABC transporter complex MetNIQ involved in methionine import. Responsible for energy coupling to the transport system. This Chlamydia caviae (strain ATCC VR-813 / DSM 19441 / 03DC25 / GPIC) (Chlamydophila caviae) protein is Methionine import ATP-binding protein MetN.